The chain runs to 1124 residues: ATP-dependent DNA helicase mph1 (1124 aa).

2 disordered regions span residues 1–103 (MFTL…EARS) and 123–302 (QLTQ…PTQH). Composition is skewed to acidic residues over residues 7–17 (DSSDYFDDDLG) and 169–178 (RDDEYDDDEE). The segment covering 210 to 222 (TPIIGQQSTTIEA) has biased composition (polar residues). The segment covering 226–236 (LLDDIPDDAFD) has biased composition (acidic residues). The span at 255–271 (SFTQSTNRPLGVRQTTL) shows a compositional bias: polar residues. The Helicase ATP-binding domain maps to 328–496 (IAQKGLFHNL…AVIDGLDISR (169 aa)). Residue 341 to 348 (LPTGLGKT) participates in ATP binding. The DEAH box signature appears at 444–447 (DEAH). A Helicase C-terminal domain is found at 666 to 840 (YLKQVVLNHF…GTRFTFHDDM (175 aa)). The segment covering 855–873 (KRAIDIPEENTVRDLPEPK) has biased composition (basic and acidic residues). Disordered regions lie at residues 855–923 (KRAI…TPEP) and 1016–1124 (MPKA…DSDD). 2 stretches are compositionally biased toward basic residues: residues 874–886 (RRGR…PKKF) and 906–916 (SKRRVPNKSKA).

The protein belongs to the DEAD box helicase family. DEAH subfamily. FANCM sub-subfamily. As to quaternary structure, interacts with the MHF histone-fold complex to form the FANCM-MHF complex.

It is found in the nucleus. The catalysed reaction is ATP + H2O = ADP + phosphate + H(+). Functionally, ATP-dependent DNA helicase involved in DNA damage repair by homologous recombination and in genome maintenance. Capable of unwinding D-loops. Plays a role in limiting crossover recombinants during mitotic DNA double-strand break (DSB) repair. Component of a FANCM-MHF complex which promotes gene conversion at blocked replication forks, probably by reversal of the stalled fork. In Aspergillus niger (strain ATCC MYA-4892 / CBS 513.88 / FGSC A1513), this protein is ATP-dependent DNA helicase mph1.